We begin with the raw amino-acid sequence, 487 residues long: Probable cobyric acid synthase (487 aa).

Residues 246 to 431 form the GATase cobBQ-type domain; it reads LVRIAVIRLP…LHGLFMVPAA (186 aa). Catalysis depends on C325, which acts as the Nucleophile. The active site involves H423.

It belongs to the CobB/CobQ family. CobQ subfamily.

Its pathway is cofactor biosynthesis; adenosylcobalamin biosynthesis. Functionally, catalyzes amidations at positions B, D, E, and G on adenosylcobyrinic A,C-diamide. NH(2) groups are provided by glutamine, and one molecule of ATP is hydrogenolyzed for each amidation. This chain is Probable cobyric acid synthase, found in Methanosphaerula palustris (strain ATCC BAA-1556 / DSM 19958 / E1-9c).